A 477-amino-acid chain; its full sequence is Glycogen synthase (477 aa).

Lysine 15 contributes to the ADP-alpha-D-glucose binding site.

Belongs to the glycosyltransferase 1 family. Bacterial/plant glycogen synthase subfamily.

It carries out the reaction [(1-&gt;4)-alpha-D-glucosyl](n) + ADP-alpha-D-glucose = [(1-&gt;4)-alpha-D-glucosyl](n+1) + ADP + H(+). It participates in glycan biosynthesis; glycogen biosynthesis. Its function is as follows. Synthesizes alpha-1,4-glucan chains using ADP-glucose. The protein is Glycogen synthase of Serratia proteamaculans (strain 568).